We begin with the raw amino-acid sequence, 235 residues long: Ribonuclease 3 (235 aa).

Residues 6 to 135 (LISLEKILGF…VIGAVYFDCG (130 aa)) form the RNase III domain. E48 contacts Mg(2+). D52 is an active-site residue. Mg(2+)-binding residues include N121 and E124. The active site involves E124. Residues 162–231 (DEKTTLQELL…AKKALELLKN (70 aa)) form the DRBM domain.

Belongs to the ribonuclease III family. As to quaternary structure, homodimer. It depends on Mg(2+) as a cofactor.

The protein localises to the cytoplasm. The enzyme catalyses Endonucleolytic cleavage to 5'-phosphomonoester.. Digests double-stranded RNA. Involved in the processing of primary rRNA transcript to yield the immediate precursors to the large and small rRNAs (23S and 16S). Processes some mRNAs, and tRNAs when they are encoded in the rRNA operon. Processes pre-crRNA and tracrRNA of type II CRISPR loci if present in the organism. The sequence is that of Ribonuclease 3 from Carboxydothermus hydrogenoformans (strain ATCC BAA-161 / DSM 6008 / Z-2901).